The chain runs to 239 residues: Small ribosomal subunit protein uS2 (239 aa).

It belongs to the universal ribosomal protein uS2 family.

In Synechococcus sp. (strain WH7803), this protein is Small ribosomal subunit protein uS2.